Consider the following 448-residue polypeptide: Asparagine--tRNA ligase (448 aa).

It belongs to the class-II aminoacyl-tRNA synthetase family. In terms of assembly, homodimer.

It is found in the cytoplasm. It catalyses the reaction tRNA(Asn) + L-asparagine + ATP = L-asparaginyl-tRNA(Asn) + AMP + diphosphate + H(+). The chain is Asparagine--tRNA ligase from Streptococcus thermophilus (strain ATCC BAA-250 / LMG 18311).